The primary structure comprises 314 residues: tRNA-cytidine(32) 2-sulfurtransferase (314 aa).

The PP-loop motif signature appears at 49–54 (SGGKDS). [4Fe-4S] cluster contacts are provided by C124, C127, and C215.

Belongs to the TtcA family. As to quaternary structure, homodimer. Mg(2+) serves as cofactor. [4Fe-4S] cluster is required as a cofactor.

The protein localises to the cytoplasm. The enzyme catalyses cytidine(32) in tRNA + S-sulfanyl-L-cysteinyl-[cysteine desulfurase] + AH2 + ATP = 2-thiocytidine(32) in tRNA + L-cysteinyl-[cysteine desulfurase] + A + AMP + diphosphate + H(+). It functions in the pathway tRNA modification. Functionally, catalyzes the ATP-dependent 2-thiolation of cytidine in position 32 of tRNA, to form 2-thiocytidine (s(2)C32). The sulfur atoms are provided by the cysteine/cysteine desulfurase (IscS) system. The chain is tRNA-cytidine(32) 2-sulfurtransferase from Histophilus somni (strain 2336) (Haemophilus somnus).